The primary structure comprises 665 residues: Pentatricopeptide repeat-containing protein At3g02490, mitochondrial (665 aa).

The transit peptide at 1–37 (MRYQWRSLLFRSYRSSPRPFLSHHSRFQVISNSTRSF) directs the protein to the mitochondrion. PPR repeat units lie at residues 280–314 (DEKT…GYEM), 315–349 (EMET…SISN), 352–388 (TPHC…GNVV), 389–423 (PDVM…GYVP), 424–458 (SGDL…GNHL), 459–493 (DDKA…EGVS), 495–530 (AGYA…QLKP), and 536–570 (KIMV…GFPP).

It belongs to the PPR family. P subfamily.

It localises to the mitochondrion. This is Pentatricopeptide repeat-containing protein At3g02490, mitochondrial from Arabidopsis thaliana (Mouse-ear cress).